We begin with the raw amino-acid sequence, 177 residues long: Large ribosomal subunit protein uL16 (177 aa).

This sequence belongs to the universal ribosomal protein uL16 family.

In Natronomonas pharaonis (strain ATCC 35678 / DSM 2160 / CIP 103997 / JCM 8858 / NBRC 14720 / NCIMB 2260 / Gabara) (Halobacterium pharaonis), this protein is Large ribosomal subunit protein uL16.